The chain runs to 310 residues: MAHMRSVLRGRLCGMREILRCQKASYTEASRKETHFGFQAVSEEEKRERVYKVFENVAHNYDIMNDAMSLGVHRFWKDWLLQLMKPTPGMQLLDMAGGTGDISFRFINYIRAQREKWIRQELKFQQDLSWPDISKTYQNKEEGSLMGSRAVICDINKEMLKVGLQKSLRLGYSEGLSWVAGDAEELPFGDDKFDVYTIAFGIRNVTHIEQALQEAYRVLKPGGRFLCLEFSHVNNPLLSKIYDVYSFQVIPVLGEVIAKDWKSYQYLVESIRRFPSQEEFKAMIEDAGFSKVNYHNLTSGVVAVHSGFKL.

The N-terminal 6 residues, 1–6 (MAHMRS), are a transit peptide targeting the mitochondrion. S-adenosyl-L-methionine is bound by residues Thr99, Asp154, and 182–183 (DA).

The protein belongs to the class I-like SAM-binding methyltransferase superfamily. MenG/UbiE family. As to quaternary structure, component of a multi-subunit COQ enzyme complex, composed of at least coq3, coq4, coq5, coq6, coq7 and coq9.

It localises to the mitochondrion inner membrane. The catalysed reaction is a 2-methoxy-6-(all-trans-polyprenyl)benzene-1,4-diol + S-adenosyl-L-methionine = a 5-methoxy-2-methyl-3-(all-trans-polyprenyl)benzene-1,4-diol + S-adenosyl-L-homocysteine + H(+). The protein operates within cofactor biosynthesis; ubiquinone biosynthesis. Its function is as follows. Methyltransferase required for the conversion of 2-polyprenyl-6-methoxy-1,4-benzoquinol (DDMQH2) to 2-polyprenyl-3-methyl-6-methoxy-1,4-benzoquinol (DMQH2). The chain is 2-methoxy-6-polyprenyl-1,4-benzoquinol methylase, mitochondrial from Xenopus laevis (African clawed frog).